Here is a 171-residue protein sequence, read N- to C-terminus: Endoribonuclease YbeY (171 aa).

The Zn(2+) site is built by histidine 126, histidine 130, and histidine 136.

Belongs to the endoribonuclease YbeY family. Zn(2+) is required as a cofactor.

Its subcellular location is the cytoplasm. Single strand-specific metallo-endoribonuclease involved in late-stage 70S ribosome quality control and in maturation of the 3' terminus of the 16S rRNA. This is Endoribonuclease YbeY from Rhizobium etli (strain ATCC 51251 / DSM 11541 / JCM 21823 / NBRC 15573 / CFN 42).